Consider the following 1003-residue polypeptide: Glycine--tRNA ligase (1003 aa).

Positions 1-310 (MSSQPLTLQA…VTPKKIPTIC (310 aa)) are glycine--tRNA ligase alpha subunit. A glycine--tRNA ligase beta subunit region spans residues 311-1003 (QPEDFLLEIG…CFGFYAWDVL (693 aa)).

Belongs to the class-II aminoacyl-tRNA synthetase family.

The protein localises to the cytoplasm. It carries out the reaction tRNA(Gly) + glycine + ATP = glycyl-tRNA(Gly) + AMP + diphosphate. This Chlamydia trachomatis serovar L2 (strain ATCC VR-902B / DSM 19102 / 434/Bu) protein is Glycine--tRNA ligase (glyQS).